Consider the following 79-residue polypeptide: Protein S100-G (79 aa).

Serine 2 is modified (N-acetylserine). EF-hand domains are found at residues 13–48 and 45–79; these read IFEKYAAKEGDPDQLSKEELKLLIQNELPALLKGSS and KGSSSIDDLFKELDKNGDGEVSFEEFQVLVKKISQ. 2 residues coordinate Ca(2+): glutamine 26 and glutamate 31. Serine 47 carries the phosphoserine modification. Residues aspartate 58, asparagine 60, aspartate 62, glutamate 64, and glutamate 69 each contribute to the Ca(2+) site.

The protein belongs to the S-100 family.

The chain is Protein S100-G (S100G) from Equus caballus (Horse).